The primary structure comprises 128 residues: Conopressin-conophysin (128 aa).

An N-terminal signal peptide occupies residues Met-1–Ala-27. Cys-28 and Cys-33 are joined by a disulfide. Position 36 is a glycine amide (Gly-36). The propeptide occupies Gly-37–Arg-44. 7 disulfides stabilise this stretch: Cys-50-Cys-90, Cys-53-Cys-64, Cys-58-Cys-80, Cys-65-Cys-70, Cys-97-Cys-115, Cys-109-Cys-127, and Cys-116-Cys-121.

The protein belongs to the vasopressin/oxytocin family. Expressed by the venom gland.

It localises to the secreted. In terms of biological role, targets vasopressin-oxytocin related receptors. Is more active on fish receptors than on their human counterparts, supporting an evolved role of this conopressin in the envenomation process. Acts as an agonist on zebrafish vasopressin receptors V1a1R (EC(50)=10.6 nM), V1a2R (EC(50)=44.06 nM, partial agonist), V2R (EC(50)=299.2 nM) and oxytocin receptor (EC(50)=353.73 nM, partial agonist). Shows a weaker activity on human receptors AVPR1B (EC(50)=51.92 nM), AVPR1A (EC(50)=123.78 nM), AVPR2 (EC(50)=299.2 nM) and oxytocin (OXTR) receptor (EC(50)=455.66 nM, partial agonist). In vivo, exhibits grooming and scratching behavior in mice, following intracerebral injection. This chain is Conopressin-conophysin, found in Conus geographus (Geography cone).